The sequence spans 296 residues: MTTKEAIADMALEAQEEDDAGPPDGGFRAWLVVLGGFLAYFVTFGMLNSFGTFQEYYGEKLLPGRSTSEISWIGSLQLFLLFIGGLFFGPVFDAKGSKVLFIPGTLLLSLSQMMVSLCKEYYQFILAQSLLFGIAVAMLFYPTISAISHWFHHRRGLAMGIVLTGSSLGGIAWPLILERLFAVVGFPWGLRIVGFISFALLAPACFMVIPRLPPRKSGGLSKADLSEGLKDRRYWLTVVGMLFVIWGMFIPFYYIPLFAMDHGVNSSFANSLISILNAGSFVGRIVSGALADKLGR.

The next 7 helical transmembrane spans lie at 30–50 (WLVVLGGFLAYFVTFGMLNSF), 72–92 (WIGSLQLFLLFIGGLFFGPVF), 98–118 (KVLFIPGTLLLSLSQMMVSLC), 124–144 (FILAQSLLFGIAVAMLFYPTI), 157–177 (LAMGIVLTGSSLGGIAWPLIL), 180–200 (LFAVVGFPWGLRIVGFISFAL), and 238–258 (VVGMLFVIWGMFIPFYYIPLF). N-linked (GlcNAc...) asparagine glycosylation occurs at asparagine 265. Residues 271–291 (SLISILNAGSFVGRIVSGALA) traverse the membrane as a helical segment.

It belongs to the major facilitator superfamily. Monocarboxylate porter (TC 2.A.1.13) family.

Its subcellular location is the cell membrane. Functionally, MFS-type transporter; part of the gene cluster that mediates the biosynthesis of pyranterreones, a family of antioxidative compounds. Directly involved in the secretion of pyranterreones. This is MFS-type transporter pytF from Aspergillus terreus (strain NIH 2624 / FGSC A1156).